A 1704-amino-acid polypeptide reads, in one-letter code: MKAVVLALTLAFVAGQNFAPEFAAGKTYVYKYEALILGGLPEEGLARAGLKISTKLLLSAADQNTYMLKLVEPELSEYSGIWPKDPAVPATKLTAALAPQLAIPIKFEYTNGVVGKVFAPEEVSTLVLNIYRGILNILQLNIKKTHKVYDLQEVGTQGVCKTLYSISEDARIENILLTKTRDLSNCQERLNKDIGLAYTEKCDKCQEETKNLRGTTTLSYVLKPVADAVMILKAYVNELIQFSPFSEANGAAQMRTKQSLEFLEIEKEPIPSVKAEYRHRGSLKYEFSDELLQTPLQLIKISDAPAQVAEVLKHLATYNIEDVHENAPLKFLELVQLLRIARYEDLEMYWNQYKKMSPHRHWFLDTIPATGTFAGLRFIKEKFMAEEITIAEAAQAFITAVHMVTADPEVIKLFESLVDSDKVVENPLLREVVFLGYGTMVNKYCNKTVDCPVELIKPIQQRLSDAIAKNEEENIILYIKVLGNAGHPSSFKSLTKIMPIHGTAAVSLPMTIHVEAIMALRNIAKKESRMVQELALQLYMDKALHPELRMLSCIVLFETSPSMGLVTTVANSVKTEENLQVASFTYSHMKSLSRSPATIHPDVAAACSAAMKILGTKLDRLSLRYSKAVHVDLYNSSLAVGAAATAFYINDAATFMPKSFVAKTKGFIAGSTAEVLEIGANIEGLQELILKNPALSESTDRITKMKRVIKALSEWRSLPTSKPLASVYVKFFGQEIGFANIDKPMIDKAVKFGKELPIQEYGREALKALLLSGINFHYAKPVLAAEMRRILPTVAGIPMELSLYSAAVAAASVEIKPNTSPRLSADFDVKTLLETDVELKAEIRPMVAMDTYAVMGLNTDIFQAALVARAKLHSVVPAKIAARLNIKEGDFKLEALPVDVPENITSMNVTTFAVARNIEEPLVERITPLLPTKVLVPIPIRRHTSKLDPTRNSMLDSSELLPMEEEDVEPIPEYKFRRFAKKYCAKHIGVGLKACFKFASQNGASIQDIVLYKLAGSHNFSFSVTPIEGEVVERLEMEVKVGAKAAEKLVKRINLSEDEETEEGGPVLVKLNKILSSRRNSSSSSSSSSSSSSESRSSRSSSSSSSSSRSSRKIDLAARTNSSSSSSSRRSRSSSSSSSSSSSSSSSSSSSSRRSSSSSSSSSSSSSRSSRRVNSTRSSSSSSRTSSASSLASFFSDSSSSSSSSDRRSKEVMEKFQRLHKKMVASGSSASSVEAIYKEKKYLGEEEAVVAVILRAVKADKRMVGYQLGFYLDKPNARVQIIVANISSDSNWRICADAVVLSKHKVTTKISWGEQCRKYSTNVTGETGIVSSSPAARLRVSWERLPSTLKRYGKMVNKYVPVKILSDLIHTKRENSTRNISVIAVATSEKTIDIITKTPMSSVYNVTMHLPMCIPIDEIKGLSPFDEVIDKIHFMVSKAAAAECSFVEDTLYTFNNRSYKNKMPSSCYQVAAQDCTDELKFMVLLRKDSSEQHHINVKISEIDIDMFPKDDNVTVKVNEMEIPPPACLTATQQLPLKIKTKRRGLAVYAPSHGLQEVYFDRKTWRIKVADWMKGKTCGLCGKADGEIRQEYHTPNGRVAKNSISFAHSWILPAESCRDASECRLKLESVQLEKQLTIHGEDSTCFSVEPVPRCLPGCLPVKTTPVTVGFSCLASDPQTSVYDRSVDLRQTTQAHLACSCNTKCS.

The N-terminal stretch at 1–14 (MKAVVLALTLAFVA) is a signal peptide. Residues 22–660 (FAAGKTYVYK…DAATFMPKSF (639 aa)) enclose the Vitellogenin domain. N-linked (GlcNAc...) asparagine glycans are attached at residues Asn446, Asn635, Asn903, Asn908, Asn1019, Asn1054, Asn1080, Asn1121, Asn1174, Asn1285, Asn1322, Asn1375, Asn1379, Asn1405, Asn1456, and Asn1512. The segment covering 1078–1109 (RRNSSSSSSSSSSSSSESRSSRSSSSSSSSSR) has biased composition (low complexity). The interval 1078–1213 (RRNSSSSSSS…SSDRRSKEVM (136 aa)) is disordered. Residues 1122-1204 (SSSSSSSRRS…FSDSSSSSSS (83 aa)) are compositionally biased toward low complexity. The region spanning 1442 to 1617 (AECSFVEDTL…SWILPAESCR (176 aa)) is the VWFD domain. 2 cysteine pairs are disulfide-bonded: Cys1444–Cys1580 and Cys1467–Cys1616.

Phosvitin, an egg yolk storage protein, is one of the most highly phosphorylated (10%) proteins in nature. In terms of processing, the N-terminal of the blood vitellogenin is blocked. Produced by the liver, secreted into the blood and then sequestered by receptor mediated endocytosis into growing oocytes, where it is generally cleaved, giving rise to the respective yolk components composed of complex suite of small cleavage products.

In terms of biological role, precursor of the major egg-yolk proteins that are sources of nutrients during early development of oviparous organisms. The sequence is that of Vitellogenin-1 (vtg1) from Fundulus heteroclitus (Killifish).